Here is a 268-residue protein sequence, read N- to C-terminus: 4-hydroxy-tetrahydrodipicolinate reductase (268 aa).

8–13 (GAAGRM) is a binding site for NAD(+). Arg-36 is a binding site for NADP(+). NAD(+)-binding positions include 99-101 (GTT) and 123-126 (AANF). The active-site Proton donor/acceptor is the His-156. His-157 lines the (S)-2,3,4,5-tetrahydrodipicolinate pocket. The Proton donor role is filled by Lys-160. 166–167 (GT) is a binding site for (S)-2,3,4,5-tetrahydrodipicolinate.

Belongs to the DapB family.

It is found in the cytoplasm. The enzyme catalyses (S)-2,3,4,5-tetrahydrodipicolinate + NAD(+) + H2O = (2S,4S)-4-hydroxy-2,3,4,5-tetrahydrodipicolinate + NADH + H(+). It carries out the reaction (S)-2,3,4,5-tetrahydrodipicolinate + NADP(+) + H2O = (2S,4S)-4-hydroxy-2,3,4,5-tetrahydrodipicolinate + NADPH + H(+). The protein operates within amino-acid biosynthesis; L-lysine biosynthesis via DAP pathway; (S)-tetrahydrodipicolinate from L-aspartate: step 4/4. Functionally, catalyzes the conversion of 4-hydroxy-tetrahydrodipicolinate (HTPA) to tetrahydrodipicolinate. The protein is 4-hydroxy-tetrahydrodipicolinate reductase of Pseudomonas fluorescens (strain ATCC BAA-477 / NRRL B-23932 / Pf-5).